A 263-amino-acid chain; its full sequence is 3-methyl-2-oxobutanoate hydroxymethyltransferase (263 aa).

Residues Asp45 and Asp84 each contribute to the Mg(2+) site. Residues 45–46 (DS), Asp84, and Lys112 each bind 3-methyl-2-oxobutanoate. Glu114 contacts Mg(2+). Catalysis depends on Glu181, which acts as the Proton acceptor.

It belongs to the PanB family. In terms of assembly, homodecamer; pentamer of dimers. It depends on Mg(2+) as a cofactor.

It is found in the cytoplasm. It catalyses the reaction 3-methyl-2-oxobutanoate + (6R)-5,10-methylene-5,6,7,8-tetrahydrofolate + H2O = 2-dehydropantoate + (6S)-5,6,7,8-tetrahydrofolate. Its pathway is cofactor biosynthesis; (R)-pantothenate biosynthesis; (R)-pantoate from 3-methyl-2-oxobutanoate: step 1/2. Catalyzes the reversible reaction in which hydroxymethyl group from 5,10-methylenetetrahydrofolate is transferred onto alpha-ketoisovalerate to form ketopantoate. The polypeptide is 3-methyl-2-oxobutanoate hydroxymethyltransferase (Buchnera aphidicola subsp. Schizaphis graminum (strain Sg)).